A 343-amino-acid chain; its full sequence is Phosphate acyltransferase (343 aa).

This sequence belongs to the PlsX family. As to quaternary structure, homodimer. Probably interacts with PlsY.

The protein resides in the cytoplasm. The catalysed reaction is a fatty acyl-[ACP] + phosphate = an acyl phosphate + holo-[ACP]. It functions in the pathway lipid metabolism; phospholipid metabolism. Catalyzes the reversible formation of acyl-phosphate (acyl-PO(4)) from acyl-[acyl-carrier-protein] (acyl-ACP). This enzyme utilizes acyl-ACP as fatty acyl donor, but not acyl-CoA. In Halorhodospira halophila (strain DSM 244 / SL1) (Ectothiorhodospira halophila (strain DSM 244 / SL1)), this protein is Phosphate acyltransferase.